Consider the following 450-residue polypeptide: UDP-N-acetylmuramoylalanine--D-glutamate ligase (450 aa).

An ATP-binding site is contributed by 119-125; it reads GSNGKTT.

The protein belongs to the MurCDEF family.

The protein resides in the cytoplasm. It carries out the reaction UDP-N-acetyl-alpha-D-muramoyl-L-alanine + D-glutamate + ATP = UDP-N-acetyl-alpha-D-muramoyl-L-alanyl-D-glutamate + ADP + phosphate + H(+). It functions in the pathway cell wall biogenesis; peptidoglycan biosynthesis. Cell wall formation. Catalyzes the addition of glutamate to the nucleotide precursor UDP-N-acetylmuramoyl-L-alanine (UMA). The protein is UDP-N-acetylmuramoylalanine--D-glutamate ligase of Bacillus cereus (strain G9842).